The primary structure comprises 312 residues: Regulation of nuclear pre-mRNA domain-containing protein 1A (312 aa).

N-acetylserine is present on Ser2. The CID domain occupies 2-133; sequence SAFSEAALEK…QLKHALYGDK (132 aa). 3 positions are modified to phosphoserine: Ser153, Ser156, and Ser285. Residues 244–286 adopt a coiled-coil conformation; the sequence is LADFLRCQKEALAEKEHKLEEYKRKLARVSLVRKELRARIQSL.

The protein belongs to the UPF0400 (RTT103) family. As to quaternary structure, may form a heterodimer with RPRD1B. Associates with the RNA polymerase II subunit POLR2A (via CTD phosphorylated at 'Ser-2' and 'Ser-7' of the heptad repeats).

Its subcellular location is the nucleus. Its function is as follows. Interacts with phosphorylated C-terminal heptapeptide repeat domain (CTD) of the largest RNA polymerase II subunit POLR2A, and participates in dephosphorylation of the CTD by RPAP2. May act as a negative regulator of cyclin-D1 (CCND1) and cyclin-E (CCNE1) in the cell cycle. The protein is Regulation of nuclear pre-mRNA domain-containing protein 1A (Rprd1a) of Mus musculus (Mouse).